A 387-amino-acid chain; its full sequence is Beta-alanyl-dopamine/carcinine hydrolase (387 aa).

It belongs to the peptidase C45 family. In terms of assembly, the unprocessed protein forms homodimers. May form heterodimers composed of a 15 kDa alpha subunit and a 30 kDa beta subunit. The protein is synthesized as a 43 kDa precursor which is then self-processed into a 15 kDa alpha subunit and a 30 kDa beta subunit. Processing appears to be necessary for beta-alanyl-dopamine/carcinine hydrolase activity. The beta subunit carries the beta-alanyl-dopamine/carcinine hydrolase activity. In terms of tissue distribution, expressed in body, head, optic lobes and retina (at protein level). Expressed in photoreceptor cells R1-R6 in the lamina and in photoreceptor cells R7 and R8 in the medulla (at protein level).

It is found in the cell projection. Its subcellular location is the axon. It localises to the cytoplasm. The catalysed reaction is carcinine + H2O = histamine + beta-alanine. It catalyses the reaction beta-alanyl-dopamine + H2O = dopamine + beta-alanine. Functionally, in the cuticle, catalyzes the hydrolysis of beta-alanyl-dopamine releasing dopamine and beta-alanine; dopamine is a metabolite involved in the pigmentation and sclerotization of the insect cuticle. In the photoreceptor cells, catalyzes the hydrolysis of carcinine releasing histamine and beta-alanine contributing to the recycling of the neurotransmitter histamine in the optical nerve system. Also, regulates the cuticular hydrocarbon composition in females. This chain is Beta-alanyl-dopamine/carcinine hydrolase, found in Drosophila melanogaster (Fruit fly).